A 731-amino-acid chain; its full sequence is 1,4-alpha-glucan branching enzyme GlgB (731 aa).

The Nucleophile role is filled by Asp-411. Residue Glu-464 is the Proton donor of the active site.

It belongs to the glycosyl hydrolase 13 family. GlgB subfamily. In terms of assembly, monomer.

It catalyses the reaction Transfers a segment of a (1-&gt;4)-alpha-D-glucan chain to a primary hydroxy group in a similar glucan chain.. It functions in the pathway glycan biosynthesis; glycogen biosynthesis. Catalyzes the formation of the alpha-1,6-glucosidic linkages in glycogen by scission of a 1,4-alpha-linked oligosaccharide from growing alpha-1,4-glucan chains and the subsequent attachment of the oligosaccharide to the alpha-1,6 position. This Mycobacterium bovis (strain ATCC BAA-935 / AF2122/97) protein is 1,4-alpha-glucan branching enzyme GlgB.